The primary structure comprises 350 residues: Phenylalanine--tRNA ligase alpha subunit (350 aa).

Glutamate 259 lines the Mg(2+) pocket.

The protein belongs to the class-II aminoacyl-tRNA synthetase family. Phe-tRNA synthetase alpha subunit type 1 subfamily. In terms of assembly, tetramer of two alpha and two beta subunits. Mg(2+) serves as cofactor.

The protein localises to the cytoplasm. It carries out the reaction tRNA(Phe) + L-phenylalanine + ATP = L-phenylalanyl-tRNA(Phe) + AMP + diphosphate + H(+). This is Phenylalanine--tRNA ligase alpha subunit from Rickettsia typhi (strain ATCC VR-144 / Wilmington).